The chain runs to 93 residues: U12-lycotoxin-Ls1d (93 aa).

An N-terminal signal peptide occupies residues 1–18 (MKFAVILLFSLVVLAVAS). Residues 19–38 (ESVEEVRREIDIEDLPEQQR) constitute a propeptide that is removed on maturation.

Belongs to the neurotoxin 31 family. Contains 5 disulfide bonds. As to expression, expressed by the venom gland.

It is found in the secreted. The protein is U12-lycotoxin-Ls1d of Lycosa singoriensis (Wolf spider).